The chain runs to 462 residues: Flavin-containing monooxygenase FMO GS-OX3 (462 aa).

Position 17–22 (17–22 (GAGPAG)) interacts with FAD. Residue 212-217 (GNFASG) participates in NADP(+) binding. The helical transmembrane segment at 318 to 338 (ALAPGLAFVGLPAMGIVFVMF) threads the bilayer.

It belongs to the FMO family.

Its subcellular location is the membrane. The catalysed reaction is a (Z)-omega-(methylsulfanyl)-N-sulfo-alkylhydroximate S-glucoside + NADPH + O2 + H(+) = a (Z)-omega-(methylsulfinyl)-alkyl-glucosinolate + NADP(+) + H2O. Catalyzes the conversion of methylthioalkyl glucosinolates of any chain length into methylsulfinylalkyl glucosinolates. Prefers probably short-chain methylthioalkyl glucosinolates in cv. Landsberg erecta. This chain is Flavin-containing monooxygenase FMO GS-OX3 (FMOGS-OX3), found in Arabidopsis thaliana (Mouse-ear cress).